The primary structure comprises 298 residues: 4-hydroxy-tetrahydrodipicolinate synthase (298 aa).

Thr-51 serves as a coordination point for pyruvate. The Proton donor/acceptor role is filled by Tyr-139. Lys-167 (schiff-base intermediate with substrate) is an active-site residue. Ile-209 is a binding site for pyruvate.

It belongs to the DapA family. As to quaternary structure, homotetramer; dimer of dimers.

Its subcellular location is the cytoplasm. The enzyme catalyses L-aspartate 4-semialdehyde + pyruvate = (2S,4S)-4-hydroxy-2,3,4,5-tetrahydrodipicolinate + H2O + H(+). It functions in the pathway amino-acid biosynthesis; L-lysine biosynthesis via DAP pathway; (S)-tetrahydrodipicolinate from L-aspartate: step 3/4. Functionally, catalyzes the condensation of (S)-aspartate-beta-semialdehyde [(S)-ASA] and pyruvate to 4-hydroxy-tetrahydrodipicolinate (HTPA). The polypeptide is 4-hydroxy-tetrahydrodipicolinate synthase (Haemophilus influenzae (strain PittEE)).